Here is a 218-residue protein sequence, read N- to C-terminus: MRSSDQLSARQRDILGFIEEFTQEHGYPPSIREIQDGLRISSTSVVAYNLRALESKGLIDRDGRVSRGIKIKNMTPMPLSRAQGGRVPLLGVITAGQPLPNPEDTSTTAVEMIEVPVDLAPPEKLQNVYALKVRGHSMIDALIDDGDIVLMRYQETADNGQMVAVRIEDDNAVTLKRFYREGDKVRLQPANVTMEPIYVDAARVHIQGRVVGVLRSMW.

A DNA-binding region (H-T-H motif) is located at residues 31-51 (IREIQDGLRISSTSVVAYNLR). Catalysis depends on for autocatalytic cleavage activity residues S137 and K176.

This sequence belongs to the peptidase S24 family. Homodimer.

The enzyme catalyses Hydrolysis of Ala-|-Gly bond in repressor LexA.. Represses a number of genes involved in the response to DNA damage (SOS response), including recA and lexA. In the presence of single-stranded DNA, RecA interacts with LexA causing an autocatalytic cleavage which disrupts the DNA-binding part of LexA, leading to derepression of the SOS regulon and eventually DNA repair. The chain is LexA repressor from Roseiflexus sp. (strain RS-1).